The sequence spans 96 residues: Prokineticin Bv8 (96 aa).

A signal peptide spans 1–19 (MKCFAQIVVLLLVIAFSHG). The tract at residues 20–24 (AVITG) is may be important for binding to prokineticin receptor 2. Disulfide bonds link Cys26-Cys38, Cys32-Cys50, Cys37-Cys78, Cys60-Cys86, and Cys80-Cys95.

As to expression, expressed by the skin glands.

It localises to the secreted. Its function is as follows. Potent agonist for both PKR1/PROKR1 and PKR2/PROKR2, and inducer of a potent and long-lasting hyperalgesia. Shows an EC(50) of 0.264 nM, when tested on neuroblastoma cells (SH-SY5Y) which endogenously express mainly PKR2/PROKR2. Also potentiates capsaicin-induced TRPV1 current, when tested on DRG neurons. Induces a biphasic hyperalgesia to tactile and thermal stimuli after systemic injection of this protein into rat. The initial phase of hyperalgesia is caused by a local action on nociceptors, because intraplantar injection of this protein causes a strong and localized hyperalgesia with a similar time course to that of the initial phase of hyperalgesia seen with systemic injection. The secondary phase of hyperalgesia is not seen with local intraplantar injection and is therefore probably attributable to a central action of this protein. At subnanomolar concentrations, this protein both induces potent chemotaxis of macrophages and stimulates LPS-induced production of the pro-inflammatory cytokines IL-1 and IL-12. In vivo, this protein potently stimulates the contraction of the guinea-pig gastrointestinal (GI) smooth muscle (at nanomolar concentration). In Bombina variegata (Yellow-bellied toad), this protein is Prokineticin Bv8.